The sequence spans 285 residues: Shikimate dehydrogenase (NADP(+)) (285 aa).

Shikimate contacts are provided by residues Ser-22–Ser-24 and Thr-71. Lys-75 functions as the Proton acceptor in the catalytic mechanism. Asn-96 and Asp-111 together coordinate shikimate. Residues Gly-136 to Ala-140, Asn-160 to Arg-165, and Ile-225 contribute to the NADP(+) site. Position 227 (Tyr-227) interacts with shikimate. Gly-248 is a binding site for NADP(+).

Belongs to the shikimate dehydrogenase family. As to quaternary structure, homodimer.

It carries out the reaction shikimate + NADP(+) = 3-dehydroshikimate + NADPH + H(+). It participates in metabolic intermediate biosynthesis; chorismate biosynthesis; chorismate from D-erythrose 4-phosphate and phosphoenolpyruvate: step 4/7. Functionally, involved in the biosynthesis of the chorismate, which leads to the biosynthesis of aromatic amino acids. Catalyzes the reversible NADPH linked reduction of 3-dehydroshikimate (DHSA) to yield shikimate (SA). This Rhizobium etli (strain CIAT 652) protein is Shikimate dehydrogenase (NADP(+)).